Consider the following 763-residue polypeptide: Cyclin-F (763 aa).

The Nuclear localization signal 1 signature appears at 19-27 (KRRVKRRPR). Residues 28–75 (VLTLLSLPEDVLLYVLECLPAVDILSMREVHPHLRSLVDSHSSVWARA) form the F-box domain. Residues 299 to 411 (INKTSIFTTQ…EIISALEGKI (113 aa)) form the Cyclin N-terminal domain. Short sequence motifs (d box) lie at residues 316 to 319 (RYIL) and 355 to 358 (RAKL). Disordered stretches follow at residues 574–600 (GSKTKRRREDSIQEDRGSFVTTPTAEL) and 677–763 (KLEN…SDEL). Positions 575–581 (SKTKRRR) match the Nuclear localization signal 2 motif. The span at 580–590 (RREDSIQEDRG) shows a compositional bias: basic and acidic residues. Residues 589 to 747 (RGSFVTTPTA…LFKASRRQVK (159 aa)) form a PEST region. Residues 692 to 710 (SSGYSSVSSGGSPTSSSSP) are compositionally biased toward low complexity. The segment covering 741-751 (ASRRQVKRKNQ) has biased composition (basic residues).

The protein belongs to the cyclin family. Cyclin AB subfamily. In terms of assembly, component of the SCF(CCNF) complex.

The protein resides in the nucleus. The protein localises to the cytoplasm. Its subcellular location is the perinuclear region. It localises to the cytoskeleton. It is found in the microtubule organizing center. The protein resides in the centrosome. The protein localises to the centriole. Functionally, substrate recognition component of the SCF(CCNF) E3 ubiquitin-protein ligase complex which mediates the ubiquitination and subsequent proteasomal degradation of target proteins. The SCF(CCNF) E3 ubiquitin-protein ligase complex is an integral component of the ubiquitin proteasome system (UPS) and links proteasome degradation to the cell cycle. Mediates the substrate recognition and the proteasomal degradation of various target proteins during G2 phase involved in the regulation of cell cycle progression and in the maintenance of genome stability. In Xenopus tropicalis (Western clawed frog), this protein is Cyclin-F (ccnf).